We begin with the raw amino-acid sequence, 1456 residues long: Sterol 3-beta-glucosyltransferase (1456 aa).

The segment covering 60 to 70 (ESDEEDGDEVE) has biased composition (acidic residues). 2 disordered regions span residues 60-113 (ESDE…SISH) and 128-156 (LSPH…TQSE). The segment covering 71–104 (TPSTTTTAVSPSATMSAPSPTATAPTPHSGTHTP) has biased composition (low complexity). Over residues 137–146 (SSHEASRRGS) the composition is skewed to basic and acidic residues. In terms of domain architecture, GRAM 1 spans 200 to 247 (QKLKGFAALDVDEQLIADYPVWLLKNVLIQGHLYITAKHMCFLSYLPR). One can recognise a PH domain in the interval 251–351 (ANIRSGTLVK…WVKALQKEIF (101 aa)). Disordered regions lie at residues 462–512 (HSAH…PRLP) and 524–776 (DKCD…QDTF). Residues 496–508 (QPHERDEKRDSKL) are compositionally biased toward basic and acidic residues. A compositionally biased stretch (polar residues) spans 556 to 567 (LASQRTSSSTLF). Composition is skewed to low complexity over residues 576-606 (SQPT…PASA) and 647-676 (GGAT…SSPG). A compositionally biased stretch (gly residues) spans 677 to 696 (TPGGLGGPGAVGAGGPGVMG). Residues 719 to 735 (APHDPAAAAAAADAAAP) are compositionally biased toward low complexity. Positions 827 to 893 (ERFQKRFALG…KVVENATKDS (67 aa)) constitute a GRAM 2 domain. Ser-1004, Arg-1005, Asp-1007, Asn-1279, Asn-1307, His-1310, His-1323, Ser-1326, Gly-1327, Thr-1328, Asp-1347, and Gln-1348 together coordinate UDP-alpha-D-glucose.

The protein belongs to the glycosyltransferase 28 family.

It is found in the cytoplasm. Its subcellular location is the membrane. It carries out the reaction a sterol + UDP-alpha-D-glucose = a sterol 3-beta-D-glucoside + UDP + H(+). The catalysed reaction is ergosterol + UDP-alpha-D-glucose = ergosteryl 3-beta-D-glucoside + UDP + H(+). Functionally, sterol glycosyltransferase responsible for the glycosylation of ergosterol to form ergosterol-glucoside. The sequence is that of Sterol 3-beta-glucosyltransferase from Yarrowia lipolytica (strain CLIB 122 / E 150) (Yeast).